The sequence spans 130 residues: Keratin-associated protein 12-1 (130 aa).

A run of 14 repeats spans residues 10–14, 15–29, 34–38, 40–44, 45–49, 60–64, 85–89, 90–94, 95–99, 104–108, 109–113, 114–118, 119–123, and 124–128. The interval 10 to 128 is 14 X 5 AA approximate repeats; that stretch reads CQPSCCVSSS…CKPVTCSNPS (119 aa).

This sequence belongs to the KRTAP type 12 family. Interacts with hair keratins. In terms of tissue distribution, expressed only in the head and back skin of a 3 day old mouse. Not expressed in adult skin.

In the hair cortex, hair keratin intermediate filaments are embedded in an interfilamentous matrix, consisting of hair keratin-associated proteins (KRTAP), which are essential for the formation of a rigid and resistant hair shaft through their extensive disulfide bond cross-linking with abundant cysteine residues of hair keratins. The matrix proteins include the high-sulfur and high-glycine-tyrosine keratins. The polypeptide is Keratin-associated protein 12-1 (Mus musculus (Mouse)).